We begin with the raw amino-acid sequence, 181 residues long: RNA pyrophosphohydrolase (181 aa).

The Nudix hydrolase domain occupies 6-148 (GFRPNVGIIV…KRQVYRQALQ (143 aa)). The Nudix box motif lies at 38 to 59 (GGVEANETPLEALYRELREEVG).

The protein belongs to the Nudix hydrolase family. RppH subfamily. A divalent metal cation serves as cofactor.

Functionally, accelerates the degradation of transcripts by removing pyrophosphate from the 5'-end of triphosphorylated RNA, leading to a more labile monophosphorylated state that can stimulate subsequent ribonuclease cleavage. The chain is RNA pyrophosphohydrolase from Halorhodospira halophila (strain DSM 244 / SL1) (Ectothiorhodospira halophila (strain DSM 244 / SL1)).